Here is a 257-residue protein sequence, read N- to C-terminus: Pyridoxine 5'-phosphate synthase (257 aa).

3-amino-2-oxopropyl phosphate is bound at residue Asn-12. 14–15 (DH) serves as a coordination point for 1-deoxy-D-xylulose 5-phosphate. Arg-23 contributes to the 3-amino-2-oxopropyl phosphate binding site. Residue His-48 is the Proton acceptor of the active site. 1-deoxy-D-xylulose 5-phosphate-binding residues include Arg-50 and His-55. The Proton acceptor role is filled by Glu-75. Residue Thr-105 coordinates 1-deoxy-D-xylulose 5-phosphate. His-199 serves as the catalytic Proton donor. 3-amino-2-oxopropyl phosphate contacts are provided by residues Gly-200 and 221 to 222 (GH).

This sequence belongs to the PNP synthase family. In terms of assembly, homooctamer; tetramer of dimers.

It localises to the cytoplasm. The catalysed reaction is 3-amino-2-oxopropyl phosphate + 1-deoxy-D-xylulose 5-phosphate = pyridoxine 5'-phosphate + phosphate + 2 H2O + H(+). It participates in cofactor biosynthesis; pyridoxine 5'-phosphate biosynthesis; pyridoxine 5'-phosphate from D-erythrose 4-phosphate: step 5/5. Functionally, catalyzes the complicated ring closure reaction between the two acyclic compounds 1-deoxy-D-xylulose-5-phosphate (DXP) and 3-amino-2-oxopropyl phosphate (1-amino-acetone-3-phosphate or AAP) to form pyridoxine 5'-phosphate (PNP) and inorganic phosphate. This chain is Pyridoxine 5'-phosphate synthase, found in Xanthobacter autotrophicus (strain ATCC BAA-1158 / Py2).